Reading from the N-terminus, the 232-residue chain is Ribonuclease 3 (232 aa).

The RNase III domain occupies 10–135; it reads ALKIYEATGY…LIGAMYMDGG (126 aa). Glutamate 48 contacts Mg(2+). Aspartate 52 is an active-site residue. Mg(2+) is bound by residues asparagine 121 and glutamate 124. Glutamate 124 is a catalytic residue. Positions 161 to 230 constitute a DRBM domain; the sequence is DPKTALQEWV…AKLMLKKITE (70 aa).

This sequence belongs to the ribonuclease III family. As to quaternary structure, homodimer. Mg(2+) serves as cofactor.

The protein resides in the cytoplasm. The enzyme catalyses Endonucleolytic cleavage to 5'-phosphomonoester.. Digests double-stranded RNA. Involved in the processing of primary rRNA transcript to yield the immediate precursors to the large and small rRNAs (23S and 16S). Processes some mRNAs, and tRNAs when they are encoded in the rRNA operon. Processes pre-crRNA and tracrRNA of type II CRISPR loci if present in the organism. This is Ribonuclease 3 from Anaplasma marginale (strain Florida).